The primary structure comprises 320 residues: Delta-aminolevulinic acid dehydratase (320 aa).

Positions 119, 121, and 129 each coordinate Zn(2+). Residue Lys-194 is the Schiff-base intermediate with substrate of the active site. Positions 204 and 216 each coordinate 5-aminolevulinate. Residue Glu-232 coordinates Mg(2+). Lys-247 (schiff-base intermediate with substrate) is an active-site residue. Ser-273 provides a ligand contact to 5-aminolevulinate.

This sequence belongs to the ALAD family. In terms of assembly, homooctamer. Requires Zn(2+) as cofactor.

It carries out the reaction 2 5-aminolevulinate = porphobilinogen + 2 H2O + H(+). It participates in porphyrin-containing compound metabolism; protoporphyrin-IX biosynthesis; coproporphyrinogen-III from 5-aminolevulinate: step 1/4. Catalyzes an early step in the biosynthesis of tetrapyrroles. Binds two molecules of 5-aminolevulinate per subunit, each at a distinct site, and catalyzes their condensation to form porphobilinogen. This is Delta-aminolevulinic acid dehydratase (hemB) from Methanothermus sociabilis.